Consider the following 158-residue polypeptide: 2-C-methyl-D-erythritol 2,4-cyclodiphosphate synthase (158 aa).

Residues Asp-9 and His-11 each contribute to the a divalent metal cation site. 4-CDP-2-C-methyl-D-erythritol 2-phosphate contacts are provided by residues 9 to 11 (DVH) and 35 to 36 (HS). His-43 serves as a coordination point for a divalent metal cation. Residues 57–59 (DIG), 62–66 (FPDTD), 101–107 (AQAPKMA), 133–136 (TTTE), Phe-140, and Arg-143 contribute to the 4-CDP-2-C-methyl-D-erythritol 2-phosphate site.

Belongs to the IspF family. In terms of assembly, homotrimer. A divalent metal cation is required as a cofactor.

The catalysed reaction is 4-CDP-2-C-methyl-D-erythritol 2-phosphate = 2-C-methyl-D-erythritol 2,4-cyclic diphosphate + CMP. It participates in isoprenoid biosynthesis; isopentenyl diphosphate biosynthesis via DXP pathway; isopentenyl diphosphate from 1-deoxy-D-xylulose 5-phosphate: step 4/6. In terms of biological role, involved in the biosynthesis of isopentenyl diphosphate (IPP) and dimethylallyl diphosphate (DMAPP), two major building blocks of isoprenoid compounds. Catalyzes the conversion of 4-diphosphocytidyl-2-C-methyl-D-erythritol 2-phosphate (CDP-ME2P) to 2-C-methyl-D-erythritol 2,4-cyclodiphosphate (ME-CPP) with a corresponding release of cytidine 5-monophosphate (CMP). The chain is 2-C-methyl-D-erythritol 2,4-cyclodiphosphate synthase from Vibrio vulnificus (strain YJ016).